Here is a 185-residue protein sequence, read N- to C-terminus: Ribosome-recycling factor (185 aa).

Residues 143–163 (EKEKLISEDDNKKGMDDIQKE) form a disordered region.

This sequence belongs to the RRF family.

It is found in the cytoplasm. Functionally, responsible for the release of ribosomes from messenger RNA at the termination of protein biosynthesis. May increase the efficiency of translation by recycling ribosomes from one round of translation to another. The protein is Ribosome-recycling factor of Syntrophomonas wolfei subsp. wolfei (strain DSM 2245B / Goettingen).